We begin with the raw amino-acid sequence, 945 residues long: Isoleucine--tRNA ligase (945 aa).

A 'HIGH' region motif is present at residues 66-76 (PYANGDIHLGH). Glu581 serves as a coordination point for L-isoleucyl-5'-AMP. The short motif at 622 to 626 (KMSKS) is the 'KMSKS' region element. Lys625 lines the ATP pocket. Cys908, Cys911, Cys928, and Cys931 together coordinate Zn(2+).

This sequence belongs to the class-I aminoacyl-tRNA synthetase family. IleS type 1 subfamily. As to quaternary structure, monomer. It depends on Zn(2+) as a cofactor.

It localises to the cytoplasm. The enzyme catalyses tRNA(Ile) + L-isoleucine + ATP = L-isoleucyl-tRNA(Ile) + AMP + diphosphate. Its function is as follows. Catalyzes the attachment of isoleucine to tRNA(Ile). As IleRS can inadvertently accommodate and process structurally similar amino acids such as valine, to avoid such errors it has two additional distinct tRNA(Ile)-dependent editing activities. One activity is designated as 'pretransfer' editing and involves the hydrolysis of activated Val-AMP. The other activity is designated 'posttransfer' editing and involves deacylation of mischarged Val-tRNA(Ile). In Burkholderia lata (strain ATCC 17760 / DSM 23089 / LMG 22485 / NCIMB 9086 / R18194 / 383), this protein is Isoleucine--tRNA ligase.